Here is a 301-residue protein sequence, read N- to C-terminus: Homoserine O-acetyltransferase (301 aa).

Residue C142 is the Acyl-thioester intermediate of the active site. Substrate contacts are provided by K163 and S192. The Proton acceptor role is filled by H235. E237 is an active-site residue. R249 contacts substrate.

The protein belongs to the MetA family.

Its subcellular location is the cytoplasm. The catalysed reaction is L-homoserine + acetyl-CoA = O-acetyl-L-homoserine + CoA. It functions in the pathway amino-acid biosynthesis; L-methionine biosynthesis via de novo pathway; O-acetyl-L-homoserine from L-homoserine: step 1/1. Functionally, transfers an acetyl group from acetyl-CoA to L-homoserine, forming acetyl-L-homoserine. This is Homoserine O-acetyltransferase from Lachnoclostridium phytofermentans (strain ATCC 700394 / DSM 18823 / ISDg) (Clostridium phytofermentans).